A 398-amino-acid chain; its full sequence is Metallophosphoesterase 1 (398 aa).

A helical membrane pass occupies residues 25-45; that stretch reads VCFVSSVLIFCEFFIYYLVIF. A divalent metal cation contacts are provided by Asp-75, Asp-117, Asn-155, His-251, His-305, and His-307. A helical membrane pass occupies residues 359-379; it reads VFAIYWAAGALLVVLVLAHFQ. The short motif at 394–398 is the Di-lysine motif element; that stretch reads KHKAA.

It belongs to the metallophosphoesterase superfamily. MPPE1 family. Mn(2+) is required as a cofactor.

Its subcellular location is the endoplasmic reticulum-Golgi intermediate compartment membrane. Its function is as follows. Metallophosphoesterase that catalyzes the removal of a side-chain ethanolamine-phosphate (EtNP) from the second mannose of the GPI-anchor protein intermediate. Participates in the glycan remodeling steps of GPI-anchor maturation to allow an efficient transport of GPI-anchor proteins from the endoplasmic reticulum to the Golgi. This is Metallophosphoesterase 1 from Gallus gallus (Chicken).